The primary structure comprises 397 residues: Tyrosine--tRNA ligase (397 aa).

The short motif at 41 to 50 (PTAPDLHLGH) is the 'HIGH' region element. The 'KMSKS' region motif lies at 225–229 (KMSKS). Residue Lys228 participates in ATP binding. Residues 340-396 (AFLADSGLAGSRGEAKRLIKQGALSLDGEKLDDPNTPLTAGEYVVRLGKKRFLRLIV) form the S4 RNA-binding domain.

It belongs to the class-I aminoacyl-tRNA synthetase family. TyrS type 2 subfamily. As to quaternary structure, homodimer.

Its subcellular location is the cytoplasm. The enzyme catalyses tRNA(Tyr) + L-tyrosine + ATP = L-tyrosyl-tRNA(Tyr) + AMP + diphosphate + H(+). Functionally, catalyzes the attachment of tyrosine to tRNA(Tyr) in a two-step reaction: tyrosine is first activated by ATP to form Tyr-AMP and then transferred to the acceptor end of tRNA(Tyr). The polypeptide is Tyrosine--tRNA ligase (Oleidesulfovibrio alaskensis (strain ATCC BAA-1058 / DSM 17464 / G20) (Desulfovibrio alaskensis)).